Reading from the N-terminus, the 188-residue chain is CyanoP (188 aa).

The first 23 residues, 1–23, serve as a signal peptide directing secretion; the sequence is MLKKSLSTAVVLVTLLLSFTLTA. C24 carries N-palmitoyl cysteine lipidation. C24 carries the S-diacylglycerol cysteine lipid modification.

The protein belongs to the PsbP family. CyanoP subfamily. In terms of assembly, monomer. Present in about 3% of photosystem II (PSII) preparations. Purifies with partially assembled PSII complexes, in addition to a small amount of monomeric and dimeric PSII, and trimeric PSI.

The protein localises to the cellular thylakoid membrane. In terms of biological role, plays a role in the early stages of photosystem II (PSII) assembly; binds to D2 (psbD) and may facilitate its incorporation into PSII. Required for optimal photoautotrophic growth in the absence of Ca(2+) or Cl(-), functions in optimizing PSII water oxidation/O(2) evolving activity. Might be involved in assembly of the oxygen evolving complex. The polypeptide is CyanoP (Synechocystis sp. (strain ATCC 27184 / PCC 6803 / Kazusa)).